A 286-amino-acid chain; its full sequence is Bifunctional protein FolD (286 aa).

NADP(+) is bound by residues 163 to 165, I188, and I229; that span reads GMS.

It belongs to the tetrahydrofolate dehydrogenase/cyclohydrolase family. In terms of assembly, homodimer.

It carries out the reaction (6R)-5,10-methylene-5,6,7,8-tetrahydrofolate + NADP(+) = (6R)-5,10-methenyltetrahydrofolate + NADPH. The enzyme catalyses (6R)-5,10-methenyltetrahydrofolate + H2O = (6R)-10-formyltetrahydrofolate + H(+). It functions in the pathway one-carbon metabolism; tetrahydrofolate interconversion. In terms of biological role, catalyzes the oxidation of 5,10-methylenetetrahydrofolate to 5,10-methenyltetrahydrofolate and then the hydrolysis of 5,10-methenyltetrahydrofolate to 10-formyltetrahydrofolate. This Helicobacter hepaticus (strain ATCC 51449 / 3B1) protein is Bifunctional protein FolD.